The chain runs to 384 residues: tRNA-specific 2-thiouridylase MnmA (384 aa).

ATP is bound by residues G9–S16 and M35. Residues N95 to D97 are interaction with target base in tRNA. C100 functions as the Nucleophile in the catalytic mechanism. Cysteines 100 and 196 form a disulfide. Residue G124 coordinates ATP. The segment at K146–Q148 is interaction with tRNA. Residue C196 is the Cysteine persulfide intermediate of the active site. The segment at R308–Y309 is interaction with tRNA.

This sequence belongs to the MnmA/TRMU family.

Its subcellular location is the cytoplasm. It carries out the reaction S-sulfanyl-L-cysteinyl-[protein] + uridine(34) in tRNA + AH2 + ATP = 2-thiouridine(34) in tRNA + L-cysteinyl-[protein] + A + AMP + diphosphate + H(+). Its function is as follows. Catalyzes the 2-thiolation of uridine at the wobble position (U34) of tRNA, leading to the formation of s(2)U34. This chain is tRNA-specific 2-thiouridylase MnmA, found in Paraburkholderia phymatum (strain DSM 17167 / CIP 108236 / LMG 21445 / STM815) (Burkholderia phymatum).